An 81-amino-acid polypeptide reads, in one-letter code: ATP synthase subunit c, chloroplastic (81 aa).

The next 2 membrane-spanning stretches (helical) occupy residues 3–23 and 57–77; these read PLISAASVIAAGLAVGLASIG and LAFMEALTIYGLVVALALLFA.

This sequence belongs to the ATPase C chain family. F-type ATPases have 2 components, F(1) - the catalytic core - and F(0) - the membrane proton channel. F(1) has five subunits: alpha(3), beta(3), gamma(1), delta(1), epsilon(1). F(0) has four main subunits: a(1), b(1), b'(1) and c(10-14). The alpha and beta chains form an alternating ring which encloses part of the gamma chain. F(1) is attached to F(0) by a central stalk formed by the gamma and epsilon chains, while a peripheral stalk is formed by the delta, b and b' chains.

The protein resides in the plastid. It is found in the chloroplast thylakoid membrane. F(1)F(0) ATP synthase produces ATP from ADP in the presence of a proton or sodium gradient. F-type ATPases consist of two structural domains, F(1) containing the extramembraneous catalytic core and F(0) containing the membrane proton channel, linked together by a central stalk and a peripheral stalk. During catalysis, ATP synthesis in the catalytic domain of F(1) is coupled via a rotary mechanism of the central stalk subunits to proton translocation. Its function is as follows. Key component of the F(0) channel; it plays a direct role in translocation across the membrane. A homomeric c-ring of between 10-14 subunits forms the central stalk rotor element with the F(1) delta and epsilon subunits. This chain is ATP synthase subunit c, chloroplastic, found in Ipomoea purpurea (Common morning glory).